A 244-amino-acid chain; its full sequence is rRNA adenine N-6-methyltransferase (244 aa).

Positions 11, 13, 38, 59, 84, and 101 each coordinate S-adenosyl-L-methionine.

This sequence belongs to the class I-like SAM-binding methyltransferase superfamily. rRNA adenine N(6)-methyltransferase family.

It catalyses the reaction adenosine(2085) in 23S rRNA + 2 S-adenosyl-L-methionine = N(6)-dimethyladenosine(2085) in 23S rRNA + 2 S-adenosyl-L-homocysteine + 2 H(+). Its function is as follows. This protein produces a dimethylation of the adenine residue at position 2085 in 23S rRNA, resulting in reduced affinity between ribosomes and macrolide-lincosamide-streptogramin B antibiotics. Is involved in erythromycin resistance. This is rRNA adenine N-6-methyltransferase (ermGT) from Limosilactobacillus reuteri (Lactobacillus reuteri).